A 541-amino-acid polypeptide reads, in one-letter code: MSKIIAYDEEARRGLERGLNALADAVKVTLGPKGRNVVLEKKWGAPTITNDGVSIAKEIELEDPYEKIGAELVKEVAKKTDDVAGDGTTTATVLAQALVREGLRNVAAGANPLGLKRGIEKAVEKVTETLLKSAKEVETKEQIAATAAISAGDTQIGELIAEAMDKVGNEGVITVEESNTFGLQLELTEGMRFDKGYISGYFVTDAERQEAVLEDPYILLVSSKVSTVKDLLPLLEKVIQAGKPLLIIAEDVEGEALSTLVVNKIRGTFKSVAVKAPGFGDRRKAMLQDIAILTGGQVVSEEVGLSLETADVALLGTARKVVVTKDETTIVEGAGDSDAIAGRVAQIRAEIENSDSDYDREKLQERLAKLAGGVAVIKAGAATEVELKERKHRIEDAVRNAKAAVEEGIVAGGGVALLQSAPSLDELNLTGDEATGANIVRVALSAPLKQIAFNGGLEPGVVAEKVTNLPAGHGLNAATGEYEDLLKAGVADPVKVTRSALQNAASIAALFLTTEAVVADKPEKAAAPAGDPTGGMGGMDF.

Residues 29-32, 86-90, Gly-413, 476-478, and Asp-492 each bind ATP; these read TLGP, DGTTT, and NAA.

This sequence belongs to the chaperonin (HSP60) family. In terms of assembly, forms a cylinder of 14 subunits composed of two heptameric rings stacked back-to-back. Interacts with the co-chaperonin GroES.

The protein resides in the secreted. It localises to the capsule. Its subcellular location is the cell surface. It is found in the cell wall. It carries out the reaction ATP + H2O + a folded polypeptide = ADP + phosphate + an unfolded polypeptide.. Functionally, together with its co-chaperonin GroES, plays an essential role in assisting protein folding. The GroEL-GroES system forms a nano-cage that allows encapsulation of the non-native substrate proteins and provides a physical environment optimized to promote and accelerate protein folding. This Mycolicibacterium vanbaalenii (strain DSM 7251 / JCM 13017 / BCRC 16820 / KCTC 9966 / NRRL B-24157 / PYR-1) (Mycobacterium vanbaalenii) protein is Chaperonin GroEL 2.